The following is a 1531-amino-acid chain: MSSEKDIKSTCSKFSLSVVAAILASVSGLASCVDLHAGGQSVNELVYVGPQAVLLLDQIRDLFVGSKDSQAEGQYRLIVGDPSSFQEKDADTLPGKVEQSTLFSVTNPVVFQGVDQQDQVSSQGLICSFTSSNLDSPRDGESFLGIAFVGDSSKAGITLTDVKASLSGAALYSTEDLIFEKIKGGLEFASCSSLEQGGACAAQSILIHDCQGLQVKHCTTAVNAEGSSANDHLGFGGGAFFVTGSLSGEKSLYMPAGDMVVANCDGAISFEGNSANFANGGAIAASGKVLFVANDKKTSFIENRALSGGAIAASSDIAFQNCAELVFKGNCAIGTEDKGSLGGGAISSLGTVLLQGNHGITCDKNESASQGGAIFGKNCQISDNEGPVVFRDSTACLGGGAIAAQEIVSIQNNQAGISFEGGKASFGGGIACGSFSSAGGASVLGTIDISKNLGAISFSRTLCTTSDLGQMEYQGGGALFGENISLSENAGVLTFKDNIVKTFASNGKILGGGAILATGKVEITNNSEGISFTGNARAPQALPTQEEFPLFSKKEGRPLSSGYSGGGAILGREVAILHNAAVVFEQNRLQCSEEEATLLGCCGGGAVHGMDSTSIVGNSSVRFGNNYAMGQGVSGGALLSKTVQLAGNGSVDFSRNIASLGGGALQASEGNCELVDNGYVLFRDNRGRVYGGAISCLRGDVVISGNKGRVEFKDNIATRLYVEETVEKVEEVEPAPEQKDNNELSFLGRAEQSFITAANQALFASEDGDLSPESSISSEELAKRRECAGGAIFAKRVRIVDNQEAVVFSNNFSDIYGGAIFTGSLREEDKLDGQIPEVLISGNAGDVVFSGNSSKRDEHLPHTGGGAICTQNLTISQNTGNVLFYNNVACSGGAVRIEDHGNVLLEAFGGDIVFKGNSSFRAQGSDAIYFAGKESHITALNATEGHAIVFHDALVFENLEERKSAEVLLINSRENPGYTGSIRFLEAESKVPQCIHVQQGSLELLNGATLCSYGFKQDAGAKLVLAAGAKLKILDSGTPVQQGHAISKPEAEIESSSEPEGAHSLWIAKNAQTTVPMVDIHTISVDLASFSSSQQEGTVEAPQVIVPGGSYVRSGELNLELVNTTGTGYENHALLKNEAKVPLMSFVASGDEASAEISNLSVSDLQIHVVTPEIEEDTYGHMGDWSEAKIQDGTLVISWNPTGYRLDPQKAGALVFNALWEEGAVLSALKNARFAHNLTAQRMEFDYSTNVWGFAFGGFRTLSAENLVAIDGYKGAYGGASAGVDIQLMEDFVLGVSGAAFLGKMDSQKFDAEVSRKGVVGSVYTGFLAGSWFFKGQYSLGETQNDMKTRYGVLGESSASWTSRGVLADALVEYRSLVGPVRPTFYALHFNPYVEVSYASMKFPGFTEQGREARSFEDASLTNITIPLGMKFELAFIKGQFSEVNSLGISYAWEAYRKVEGGAVQLLEAGFDWEGAPMDLPRQELRVALENNTEWSSYFSTVLGLTAFCGGFTSTDSKLGYEANTGLRLIF.

Residues 1 to 20 (MSSEKDIKSTCSKFSLSVVA) form the signal peptide. One can recognise an Autotransporter domain in the interval 1244-1531 (EFDYSTNVWG…EANTGLRLIF (288 aa)).

Belongs to the PMP outer membrane protein family.

It localises to the secreted. The protein resides in the cell wall. The protein localises to the cell outer membrane. In Chlamydia trachomatis serovar D (strain ATCC VR-885 / DSM 19411 / UW-3/Cx), this protein is Probable outer membrane protein PmpD (pmpD).